The chain runs to 151 residues: Ribosome maturation factor RimP (151 aa).

It belongs to the RimP family.

Its subcellular location is the cytoplasm. Its function is as follows. Required for maturation of 30S ribosomal subunits. The polypeptide is Ribosome maturation factor RimP (Saccharophagus degradans (strain 2-40 / ATCC 43961 / DSM 17024)).